The primary structure comprises 366 residues: S-adenosylmethionine:tRNA ribosyltransferase-isomerase (366 aa).

Belongs to the QueA family. Monomer.

The protein localises to the cytoplasm. The catalysed reaction is 7-aminomethyl-7-carbaguanosine(34) in tRNA + S-adenosyl-L-methionine = epoxyqueuosine(34) in tRNA + adenine + L-methionine + 2 H(+). The protein operates within tRNA modification; tRNA-queuosine biosynthesis. Transfers and isomerizes the ribose moiety from AdoMet to the 7-aminomethyl group of 7-deazaguanine (preQ1-tRNA) to give epoxyqueuosine (oQ-tRNA). The chain is S-adenosylmethionine:tRNA ribosyltransferase-isomerase from Synechococcus sp. (strain CC9605).